A 220-amino-acid polypeptide reads, in one-letter code: Redox-sensing transcriptional repressor Rex (220 aa).

Positions 25-64 form a DNA-binding region, H-T-H motif; that stretch reads WYLSNVKLLKQRGERFVSSTQISKEINIDASQIAKDLSYV. NAD(+) is bound at residue 99 to 104; it reads GVGSLG.

This sequence belongs to the transcriptional regulatory Rex family. Homodimer.

Its subcellular location is the cytoplasm. Its function is as follows. Modulates transcription in response to changes in cellular NADH/NAD(+) redox state. In Bacteroides thetaiotaomicron (strain ATCC 29148 / DSM 2079 / JCM 5827 / CCUG 10774 / NCTC 10582 / VPI-5482 / E50), this protein is Redox-sensing transcriptional repressor Rex.